We begin with the raw amino-acid sequence, 247 residues long: Neurotrophic factor BDNF precursor form (247 aa).

Positions 1 to 18 (MTILFLTMVISYFGCMKA) are cleaved as a signal peptide. Positions 19-128 (APMKEANIRG…AANMSMRVRR (110 aa)) are excised as a propeptide. Residue Asn-121 is glycosylated (N-linked (GlcNAc...) asparagine). Intrachain disulfides connect Cys-141–Cys-208, Cys-186–Cys-237, and Cys-196–Cys-239.

The protein belongs to the NGF-beta family. As to quaternary structure, monomers and homodimers. Binds to NTRK2/TRKB. Can form heterodimers with other neurotrophin family members, such as NTF3 and NTF4 (in vitro), but the physiological relevance of this is not clear. BDNF precursor form: interacts with the heterodimer formed by NGFR and SORCS2. Post-translationally, N-glycosylated and glycosulfated, contrary to mature BDNF. In terms of processing, mature BDNF is produced by proteolytic removal of the propeptide, catalyzed by a FURIN family member. In addition, the precursor form is proteolytically cleaved within the propeptide, but this is not an obligatory intermediate for the production of mature BDNF. Can be converted into mature BDNF by plasmin (PLG). In terms of tissue distribution, detected in blood plasma and in saliva (at protein level). Brain. Highly expressed in hippocampus, amygdala, cerebral cortex and cerebellum. Also expressed in heart, lung, skeletal muscle, testis, prostate and placenta.

The protein resides in the secreted. In terms of biological role, important signaling molecule that activates signaling cascades downstream of NTRK2. During development, promotes the survival and differentiation of selected neuronal populations of the peripheral and central nervous systems. Participates in axonal growth, pathfinding and in the modulation of dendritic growth and morphology. Major regulator of synaptic transmission and plasticity at adult synapses in many regions of the CNS. The versatility of BDNF is emphasized by its contribution to a range of adaptive neuronal responses including long-term potentiation (LTP), long-term depression (LTD), certain forms of short-term synaptic plasticity, as well as homeostatic regulation of intrinsic neuronal excitability. Its function is as follows. Important signaling molecule that activates signaling cascades downstream of NTRK2. Activates signaling cascades via the heterodimeric receptor formed by NGFR and SORCS2. Signaling via NGFR and SORCS2 plays a role in synaptic plasticity and long-term depression (LTD). Binding to NGFR and SORCS2 promotes neuronal apoptosis. Promotes neuronal growth cone collapse. This is Neurotrophic factor BDNF precursor form from Homo sapiens (Human).